Reading from the N-terminus, the 206-residue chain is RNA-binding protein with multiple splicing 2 (206 aa).

An N-acetylserine modification is found at S2. In terms of domain architecture, RRM spans R25–A102. Residues D35 to F45 form an important for homodimerization region.

As to quaternary structure, homodimer. Interacts with EEF2.

The protein resides in the cytoplasm. Its subcellular location is the nucleus. It is found in the stress granule. Its function is as follows. RNA-binding protein involved in the regulation of smooth muscle cell differentiation and proliferation in the gastrointestinal system. Binds NOG mRNA, the major inhibitor of the bone morphogenetic protein (BMP) pathway. Mediates an increase of NOG mRNA levels, thereby contributing to the negative regulation of BMP signaling pathway and promoting reversible dedifferentiation and proliferation of smooth muscle cells. Acts as a pre-mRNA alternative splicing regulator. Mediates ACTN1 and FLNB alternative splicing. Likely binds to mRNA tandem CAC trinucleotide or CA dinucleotide motifs. The sequence is that of RNA-binding protein with multiple splicing 2 (Rbpms2) from Mus musculus (Mouse).